We begin with the raw amino-acid sequence, 201 residues long: Recombination protein RecR (201 aa).

The segment at 60 to 75 (CQVCGNVDVRDPCTVC) adopts a C4-type zinc-finger fold. The Toprim domain maps to 83–178 (SVLVVVAEVA…KVTRLAHGVP (96 aa)).

Belongs to the RecR family.

May play a role in DNA repair. It seems to be involved in an RecBC-independent recombinational process of DNA repair. It may act with RecF and RecO. This Azorhizobium caulinodans (strain ATCC 43989 / DSM 5975 / JCM 20966 / LMG 6465 / NBRC 14845 / NCIMB 13405 / ORS 571) protein is Recombination protein RecR.